A 235-amino-acid polypeptide reads, in one-letter code: Proteasome subunit alpha type-2-A (235 aa).

Lys64 participates in a covalent cross-link: Glycyl lysine isopeptide (Lys-Gly) (interchain with G-Cter in ubiquitin).

The protein belongs to the peptidase T1A family. Component of the 20S core complex of the 26S proteasome. The 26S proteasome is composed of a core protease (CP), known as the 20S proteasome, capped at one or both ends by the 19S regulatory particle (RP/PA700). The 20S proteasome core is composed of 28 subunits that are arranged in four stacked rings, resulting in a barrel-shaped structure. The two end rings are each formed by seven alpha subunits, and the two central rings are each formed by seven beta subunits. The catalytic chamber with the active sites is on the inside of the barrel.

The protein resides in the cytoplasm. The protein localises to the nucleus. Functionally, the proteasome is a multicatalytic proteinase complex which is characterized by its ability to cleave peptides with Arg, Phe, Tyr, Leu, and Glu adjacent to the leaving group at neutral or slightly basic pH. The proteasome has an ATP-dependent proteolytic activity. This chain is Proteasome subunit alpha type-2-A (PAB1), found in Arabidopsis thaliana (Mouse-ear cress).